We begin with the raw amino-acid sequence, 84 residues long: Large ribosomal subunit protein bL27 (84 aa).

Residues 1-21 (MAHKKGAGSTKNGRDSKPKML) form a disordered region.

It belongs to the bacterial ribosomal protein bL27 family.

The polypeptide is Large ribosomal subunit protein bL27 (Dehalococcoides mccartyi (strain ATCC BAA-2100 / JCM 16839 / KCTC 5957 / BAV1)).